The sequence spans 153 residues: Putative pre-16S rRNA nuclease (153 aa).

This sequence belongs to the YqgF nuclease family.

It is found in the cytoplasm. Its function is as follows. Could be a nuclease involved in processing of the 5'-end of pre-16S rRNA. The polypeptide is Putative pre-16S rRNA nuclease (Prochlorococcus marinus (strain MIT 9301)).